We begin with the raw amino-acid sequence, 417 residues long: Queuine tRNA-ribosyltransferase accessory subunit 2 (417 aa).

4 residues coordinate Zn(2+): cysteine 324, cysteine 326, cysteine 329, and histidine 355.

This sequence belongs to the queuine tRNA-ribosyltransferase family. QTRT2 subfamily. As to quaternary structure, heterodimer of a catalytic subunit and an accessory subunit. The cofactor is Zn(2+).

It localises to the cytoplasm. Non-catalytic subunit of the queuine tRNA-ribosyltransferase (TGT) that catalyzes the base-exchange of a guanine (G) residue with queuine (Q) at position 34 (anticodon wobble position) in tRNAs with GU(N) anticodons (tRNA-Asp, -Asn, -His and -Tyr), resulting in the hypermodified nucleoside queuosine (7-(((4,5-cis-dihydroxy-2-cyclopenten-1-yl)amino)methyl)-7-deazaguanosine). In Drosophila persimilis (Fruit fly), this protein is Queuine tRNA-ribosyltransferase accessory subunit 2.